The sequence spans 495 residues: Major facilitator-type transporter hxnP (495 aa).

The segment at 1-24 is disordered; that stretch reads MGATATDIEKVPSAGTPDEPKAGE. 5 helical membrane passes run 36–55, 84–104, 123–143, 145–165, and 177–197; these read SFVR…MYFF, LLIL…NLLI, VWGI…LLAI, IILG…FTLF, and VLQS…FGLF. N-linked (GlcNAc...) asparagine glycosylation is present at Asn200. 5 helical membrane passes run 209–229, 282–302, 314–334, 341–361, and 368–388; these read WLFI…FWWL, VITF…PIIV, LWTV…AKSS, SLHI…LASI, and GVSY…TCLV. Asn395 carries an N-linked (GlcNAc...) asparagine glycan. The next 2 membrane-spanning stretches (helical) occupy residues 404 to 424 and 436 to 456; these read ANTG…AATF and LVAT…MGTW.

Belongs to the major facilitator superfamily.

It localises to the cell membrane. Its function is as follows. Major facilitator-type transporter, part of the hnx cluster involved in the purine degradation. The nicotinate hydroxylase hnxS accepts nicotinate as a substrate and catalyzes the first step of nicotinate catabolism. The major facilitator-type transporters hxnP and hxnZ are probably involved in the uptake of nicotinate-derived metabolites, and the oxidoreductases hxnT and hxnY in the further metabolism of 6-OH nicotinic acid. This chain is Major facilitator-type transporter hxnP, found in Emericella nidulans (strain FGSC A4 / ATCC 38163 / CBS 112.46 / NRRL 194 / M139) (Aspergillus nidulans).